An 807-amino-acid chain; its full sequence is Glycerol-3-phosphate acyltransferase (807 aa).

The HXXXXD motif signature appears at 308 to 313 (CHRSHM).

It belongs to the GPAT/DAPAT family.

It is found in the cell inner membrane. The enzyme catalyses sn-glycerol 3-phosphate + an acyl-CoA = a 1-acyl-sn-glycero-3-phosphate + CoA. Its pathway is phospholipid metabolism; CDP-diacylglycerol biosynthesis; CDP-diacylglycerol from sn-glycerol 3-phosphate: step 1/3. The sequence is that of Glycerol-3-phosphate acyltransferase from Shewanella sp. (strain MR-4).